Consider the following 1083-residue polypeptide: Glutamate receptor-interacting protein 2 (1083 aa).

3 consecutive PDZ domains span residues 58–141 (IVEL…EYEL), 156–244 (TIEI…EYDV), and 258–342 (LVEI…LPAH). Positions 408–422 (AGTPGFSSQNSNTLP) are enriched in polar residues. The segment at 408–460 (AGTPGFSSQNSNTLPRTVHPMSPRTTMNRRRQKRKDHKSSLSLASSTVGPGGQ) is disordered. Basic residues predominate over residues 434-444 (MNRRRQKRKDH). 3 PDZ domains span residues 468–555 (EIIL…EIEF), 569–652 (HVKL…RKDE), and 667–749 (TVEL…KKQT). 3 disordered regions span residues 754–783 (PQRL…LSEI), 853–872 (NEQD…GLET), and 936–965 (GSHH…VHNA). Over residues 774–783 (SQKTSKLSEI) the composition is skewed to polar residues. Residues 945–963 (PKKENKLSQDARSKKEEVH) show a composition bias toward basic and acidic residues. Residues 974-1056 (KVTVQKDMDT…RLDLVISRGL (83 aa)) form the PDZ 7 domain.

Belongs to the GRIP2 family. Enriched in the mitochondrial cloud of stage I oocytes, before becoming concentrated at the tip of the vegetal cortex in stage II oocytes. Expression becomes localized to the germ plasm of stage III-IV oocytes and early cleavage stages. At the tailbud stage, localizes to the migrating primordial germ cells (PGCs) until PGC migration is complete (stage 40), at which point expression disappears. In the adult, expressed in the brain, ovary, eye, muscle, spinal cord and very weakly in adipocytes.

The protein resides in the cytoplasm. In terms of biological role, plays an important role in primordial germ cell (PGC) maintenance and efficiency of PGC migration. The protein is Glutamate receptor-interacting protein 2 of Xenopus laevis (African clawed frog).